A 163-amino-acid chain; its full sequence is MAASGEQAPCSVYFCGSIRGGREDQALYARIVSRLRRYGKVLTEHVADAELEPLGEEAAGGDQFIHEQDLNWLQQADVVVAEVTQPSLGVGYELGRAVALGKPILCLFRPQSGRVLSAMIRGAADGSRFQVWDYAEGEVETMLDRYFEAYLPQKTASSSHPSA.

The residue at position 2 (alanine 2) is an N-acetylalanine. Glycine 16 provides a ligand contact to 5-hydroxymethyl-dUMP. Position 17 is a phosphoserine (serine 17). Isoleucine 18, arginine 19, glycine 20, serine 87, glycine 89, and glutamate 93 together coordinate 5-hydroxymethyl-dUMP. Residue serine 87 is modified to Phosphoserine. A phosphoserine mark is found at serine 112, serine 117, serine 127, and serine 158. Serine 117 contacts 5-hydroxymethyl-dUMP.

In terms of assembly, monomer and homodimer. As to expression, highly expressed in heart, kidney, liver and spleen. Weakly expressed in lung and skeletal muscle.

The protein localises to the cytoplasm. It is found in the nucleus. It catalyses the reaction 5-hydroxymethyl-dUMP + H2O = 5-hydroxymethyluracil + 2-deoxy-D-ribose 5-phosphate. Its function is as follows. Part of a nucleotide salvage pathway that eliminates epigenetically modified 5-hydroxymethyl-dCMP (hmdCMP) in a two-step process entailing deamination to cytotoxic 5-hydroxymethyl-dUMP (hmdUMP), followed by its hydrolysis into 5-hydroxymethyluracil (hmU) and 2-deoxy-D-ribose 5-phosphate (deoxyribosephosphate). Catalyzes the second step in that pathway, the hydrolysis of the N-glycosidic bond in hmdUMP, degrading this cytotoxic nucleotide to avoid its genomic integration. This chain is 5-hydroxymethyl-dUMP N-hydrolase, found in Rattus norvegicus (Rat).